The primary structure comprises 693 residues: TGF-beta-activated kinase 1 and MAP3K7-binding protein 2 (693 aa).

The 44-residue stretch at 8–51 (IDFQVLHDLRQKFPEVPEVVVSRCMLQNNNNLDACCAVLSQEST) folds into the CUE domain. A disordered region spans residues 91 to 130 (GREGSRMNGSRTLTHSISDGQLQGGQSNSELFQQEPQTAP). Residues 97–130 (MNGSRTLTHSISDGQLQGGQSNSELFQQEPQTAP) are compositionally biased toward polar residues. Arg173 is subject to Asymmetric dimethylarginine. The tract at residues 219 to 310 (ITTPGGTTRQ…SGSSQSSAHS (92 aa)) is disordered. The span at 220-231 (TTPGGTTRQTQQ) shows a compositional bias: low complexity. The segment covering 232-282 (HSGWVSQFNPMNPQQVYQPSQPGPWTTCPASNPLSHTSSQQPNQQGHQTSH) has biased composition (polar residues). The segment covering 286–310 (PISSPTTSQPPTIHSSGSSQSSAHS) has biased composition (low complexity). Lys329 participates in a covalent cross-link: Glycyl lysine isopeptide (Lys-Gly) (interchain with G-Cter in SUMO). The disordered stretch occupies residues 330-381 (LEPPQRNNSSKLRSSGPRTSSTSSSVNSQTLNRNQPTVYIAASPPNTDELMS). Over residues 343–359 (SSGPRTSSTSSSVNSQT) the composition is skewed to low complexity. Phosphoserine occurs at positions 372, 450, 482, and 524. A coiled-coil region spans residues 532–619 (YTQALLVHQK…TKEIDLFQAR (88 aa)). Lys562 is covalently cross-linked (Glycyl lysine isopeptide (Lys-Gly) (interchain with G-Cter in SUMO)). The residue at position 582 (Ser582) is a Phosphoserine. Lys611 is covalently cross-linked (Glycyl lysine isopeptide (Lys-Gly) (interchain with G-Cter in ubiquitin)). The segment at 642 to 663 (PPKPKDQRSIIKTPKTQDTEDD) is disordered. The RanBP2-type zinc finger occupies 663–693 (DEGAQWNCTACTFLNHPALIRCEQCEMPRHF). Cys673 bears the (Microbial infection) S-methylcysteine mark. Residues 675–685 (FLNHPALIRCE) are interaction with polyubiquitin.

In terms of assembly, interacts with MAP3K7 and TRAF6. Identified in the TRIKA2 complex composed of MAP3K7, TAB1 and TAB2. Binds 'Lys-63'-linked polyubiquitin chains. Interacts with NCOR1 and HDAC3 to form a ternary complex. Interacts (via C-terminal) with NUMBL (via PTB domain). Interacts (via the C-terminus) with DYNC2I2 (via WD domains). Interacts with RBCK1. Interacts with TRIM5. Interacts with TRIM38 (via B30.2/SPRY domain), leading to its translocation to lysosomes and degradation. Interacts with ASB1; this interaction promotes TAB2 stability. In terms of processing, degraded in a lysosome-dependent manner following interaction with TRIM38. Post-translationally, SUMOylated by TRIM60; leading to inhibition of MAPK/NF-kappaB activation and the innate immune response. Ubiquitinated; following IL1 stimulation or TRAF6 overexpression. Ubiquitination involves RBCK1 leading to proteasomal degradation. Ubiquitinated at Lys-611 by TRIM45 leading to proteasomal degradation. In terms of processing, phosphorylated. Post-translationally, (Microbial infection) Methylated at Cys-673 by enteropathogenic E.coli protein NleE or S.flexneri protein OspZ: methylation disrupts zinc-binding and ability to bind 'Lys-63'-linked ubiquitin, leading to NF-kappa-B inactivation. In terms of tissue distribution, widely expressed. In the embryo, expressed in the ventricular trabeculae, endothelial cells of the conotruncal cushions of the outflow tract and in the endothelial cells lining the developing aortic valves.

Its subcellular location is the membrane. The protein resides in the endosome membrane. It localises to the lysosome membrane. The protein localises to the cytoplasm. It is found in the cytosol. Adapter required to activate the JNK and NF-kappa-B signaling pathways through the specific recognition of 'Lys-63'-linked polyubiquitin chains by its RanBP2-type zinc finger (NZF). Acts as an adapter linking MAP3K7/TAK1 and TRAF6 to 'Lys-63'-linked polyubiquitin chains. The RanBP2-type zinc finger (NZF) specifically recognizes Lys-63'-linked polyubiquitin chains unanchored or anchored to the substrate proteins such as RIPK1/RIP1 and RIPK2: this acts as a scaffold to organize a large signaling complex to promote autophosphorylation of MAP3K7/TAK1, and subsequent activation of I-kappa-B-kinase (IKK) core complex by MAP3K7/TAK1. Also recognizes and binds Lys-63'-linked polyubiquitin chains of heterotypic 'Lys-63'-/'Lys-48'-linked branched ubiquitin chains. Regulates the IL1-mediated translocation of NCOR1 out of the nucleus. Involved in heart development. This Homo sapiens (Human) protein is TGF-beta-activated kinase 1 and MAP3K7-binding protein 2.